The sequence spans 147 residues: Hemoglobin subunit beta (147 aa).

V2 bears the N-acetylvaline mark. The region spanning 3 to 147 (HLTGDEKAAV…VANALAHKYH (145 aa)) is the Globin domain. Residue T13 is modified to Phosphothreonine. Phosphoserine is present on S45. K60 bears the N6-acetyllysine mark. H64 contributes to the heme b binding site. N6-acetyllysine is present on K83. Residue H93 participates in heme b binding. The residue at position 94 (C94) is an S-nitrosocysteine. K145 is subject to N6-acetyllysine.

Belongs to the globin family. Heterotetramer of two alpha chains and two beta chains. As to expression, red blood cells.

Involved in oxygen transport from the lung to the various peripheral tissues. The chain is Hemoglobin subunit beta (HBB) from Alouatta belzebul (Red-handed howler monkey).